Consider the following 194-residue polypeptide: Chromophore lyase CpcT/CpeT 1 (194 aa).

The protein belongs to the CpcT/CpeT biliprotein lyase family.

Covalently attaches a chromophore to Cys residue(s) of phycobiliproteins. In Microcystis aeruginosa (strain NIES-843 / IAM M-2473), this protein is Chromophore lyase CpcT/CpeT 1.